Here is a 326-residue protein sequence, read N- to C-terminus: Vitamin B12 import system permease protein BtuC (326 aa).

A run of 9 helical transmembrane segments spans residues 13 to 35, 55 to 77, 90 to 107, 111 to 133, 146 to 168, 188 to 205, 242 to 264, 274 to 296, and 303 to 322; these read IRWL…CAGE, IRLP…GAVM, LLGV…AVLL, QLPN…LILL, LLAG…YFST, WRQS…LWIC, MVGV…PHIL, VLLP…VARL, and LPIG…WLLL.

The protein belongs to the binding-protein-dependent transport system permease family. FecCD subfamily. As to quaternary structure, the complex is composed of two ATP-binding proteins (BtuD), two transmembrane proteins (BtuC) and a solute-binding protein (BtuF).

It localises to the cell inner membrane. Part of the ABC transporter complex BtuCDF involved in vitamin B12 import. Involved in the translocation of the substrate across the membrane. The sequence is that of Vitamin B12 import system permease protein BtuC from Shigella flexneri.